Reading from the N-terminus, the 82-residue chain is Photosystem I iron-sulfur center (82 aa).

2 consecutive 4Fe-4S ferredoxin-type domains span residues 2–31 (AHSVKIYDTCIGCTQCVRACPTDVLEMVPW) and 40–69 (IAAAPRTEDCVGCKRCETACPTDFLSIRVY). 8 residues coordinate [4Fe-4S] cluster: Cys-11, Cys-14, Cys-17, Cys-21, Cys-49, Cys-52, Cys-55, and Cys-59.

In terms of assembly, the cyanobacterial PSI reaction center is composed of one copy each of PsaA,B,C,D,E,F,I,J,K,L,M and X, and forms trimeric complexes. [4Fe-4S] cluster serves as cofactor.

It is found in the cellular thylakoid membrane. The enzyme catalyses reduced [plastocyanin] + hnu + oxidized [2Fe-2S]-[ferredoxin] = oxidized [plastocyanin] + reduced [2Fe-2S]-[ferredoxin]. Apoprotein for the two 4Fe-4S centers FA and FB of photosystem I (PSI); essential for photochemical activity. FB is the terminal electron acceptor of PSI, donating electrons to ferredoxin. The C-terminus interacts with PsaA/B/D and helps assemble the protein into the PSI complex. Required for binding of PsaD and PsaE to PSI. PSI is a plastocyanin/cytochrome c6-ferredoxin oxidoreductase, converting photonic excitation into a charge separation, which transfers an electron from the donor P700 chlorophyll pair to the spectroscopically characterized acceptors A0, A1, FX, FA and FB in turn. The polypeptide is Photosystem I iron-sulfur center (Synechococcus sp. (strain JA-2-3B'a(2-13)) (Cyanobacteria bacterium Yellowstone B-Prime)).